A 233-amino-acid chain; its full sequence is DnaA regulatory inactivator Hda (233 aa).

Belongs to the DnaA family. HdA subfamily. As to quaternary structure, the active form seems to be an ADP-bound monomer. Forms the RIDA complex (regulatory inactivation of DnaA) of ATP-DnaA, ADP-Hda and the DNA-loaded beta sliding clamp (dnaN).

Mediates the interaction of DNA replication initiator protein DnaA with DNA polymerase subunit beta sliding clamp (dnaN). Stimulates hydrolysis of ATP-DnaA to ADP-DnaA, rendering DnaA inactive for reinitiation, a process called regulatory inhibition of DnaA or RIDA. The sequence is that of DnaA regulatory inactivator Hda from Photorhabdus laumondii subsp. laumondii (strain DSM 15139 / CIP 105565 / TT01) (Photorhabdus luminescens subsp. laumondii).